We begin with the raw amino-acid sequence, 361 residues long: Chorismate synthase (361 aa).

The NADP(+) site is built by Arg-48 and Arg-54. Residues 125-127 (RSS), 238-239 (NA), Gly-278, 293-297 (KPTSS), and Arg-319 each bind FMN.

The protein belongs to the chorismate synthase family. Homotetramer. It depends on FMNH2 as a cofactor.

The catalysed reaction is 5-O-(1-carboxyvinyl)-3-phosphoshikimate = chorismate + phosphate. The protein operates within metabolic intermediate biosynthesis; chorismate biosynthesis; chorismate from D-erythrose 4-phosphate and phosphoenolpyruvate: step 7/7. Functionally, catalyzes the anti-1,4-elimination of the C-3 phosphate and the C-6 proR hydrogen from 5-enolpyruvylshikimate-3-phosphate (EPSP) to yield chorismate, which is the branch point compound that serves as the starting substrate for the three terminal pathways of aromatic amino acid biosynthesis. This reaction introduces a second double bond into the aromatic ring system. In Escherichia coli O7:K1 (strain IAI39 / ExPEC), this protein is Chorismate synthase.